Consider the following 324-residue polypeptide: tRNA pseudouridine synthase B (324 aa).

The active-site Nucleophile is the Asp49.

The protein belongs to the pseudouridine synthase TruB family. Type 1 subfamily.

It carries out the reaction uridine(55) in tRNA = pseudouridine(55) in tRNA. Functionally, responsible for synthesis of pseudouridine from uracil-55 in the psi GC loop of transfer RNAs. The chain is tRNA pseudouridine synthase B from Tolumonas auensis (strain DSM 9187 / NBRC 110442 / TA 4).